Consider the following 545-residue polypeptide: Membrane protein insertase YidC (545 aa).

The next 4 helical transmembrane spans lie at 350-370 (IIGN…AVLY), 424-444 (LPML…FASV), 461-481 (ADPY…QTYL), and 498-518 (PLVF…YWVV).

This sequence belongs to the OXA1/ALB3/YidC family. Type 1 subfamily. Interacts with the Sec translocase complex via SecD. Specifically interacts with transmembrane segments of nascent integral membrane proteins during membrane integration.

The protein localises to the cell inner membrane. Functionally, required for the insertion and/or proper folding and/or complex formation of integral membrane proteins into the membrane. Involved in integration of membrane proteins that insert both dependently and independently of the Sec translocase complex, as well as at least some lipoproteins. Aids folding of multispanning membrane proteins. The chain is Membrane protein insertase YidC from Neisseria gonorrhoeae (strain ATCC 700825 / FA 1090).